Reading from the N-terminus, the 229-residue chain is Cytochrome b6-f complex iron-sulfur subunit, chloroplastic (229 aa).

A chloroplast-targeting transit peptide spans 1–50; it reads MASSSLSPATQLGSSRSALMAMSSGLFVKPTKMNHQMVRKEKIGLRISCQ. The chain crosses the membrane as a helical span at residues 68-90; that stretch reads LNLLLLGALSLPTGYMLVPYATF. A Rieske domain is found at 115–211; it reads AAEWLKTHGP…ADIDEAGKVL (97 aa). Cys157, His159, Cys175, and His178 together coordinate [2Fe-2S] cluster. An intrachain disulfide couples Cys162 to Cys177. At Ser196 the chain carries Phosphoserine.

The protein belongs to the Rieske iron-sulfur protein family. The 4 large subunits of the cytochrome b6-f complex are cytochrome b6, subunit IV (17 kDa polypeptide, petD), cytochrome f and the Rieske protein, while the 4 small subunits are petG, petL, petM and petN. The complex functions as a dimer. Interacts with PGRL1A. Component of a mitochondrial large protein complex that contains, at least, MIC60, DGS1, TOM40, TOM20 proteins, and petC/RISP. Requires [2Fe-2S] cluster as cofactor. As to expression, confined to photosynthetic tissues, with highest levels in flowers. In leaves, mostly localized in mesophyll cells. In stems, confined to the peripheral ring of chlorenchyma and adjoining groups of cells associated with the vascular bundles. In siliques, present in green wall of the fruit and in peduncle but not in the translucide white septum of the seeds.

Its subcellular location is the plastid. It localises to the chloroplast thylakoid membrane. The protein resides in the mitochondrion inner membrane. It carries out the reaction 2 oxidized [plastocyanin] + a plastoquinol + 2 H(+)(in) = 2 reduced [plastocyanin] + a plastoquinone + 4 H(+)(out). Functionally, essential protein for photoautotrophism. Confers resistance to photo-oxidative damages by contributing to the thermal dissipation of light energy and to lumenal acidification (increase of pH gradient). Component of the cytochrome b6-f complex, which mediates electron transfer between photosystem II (PSII) and photosystem I (PSI), cyclic electron flow around PSI, and state transitions. The protein is Cytochrome b6-f complex iron-sulfur subunit, chloroplastic of Arabidopsis thaliana (Mouse-ear cress).